The chain runs to 323 residues: Voltage-dependent calcium channel gamma-2 subunit (323 aa).

Residues 10–30 (MLLTTVGAFAAFSLMTIAVGT) form a helical membrane-spanning segment. Asn48 carries an N-linked (GlcNAc...) asparagine glycan. 3 consecutive transmembrane segments (helical) span residues 104 to 124 (SSIFPILSVILLFMGGLCIAA), 134 to 154 (IILSAGIFFVSAGLSNIIGII), and 182 to 202 (FGALSFIIAEMVGVLAVHMFI). A disordered region spans residues 233–261 (YQRRSRSSSRSTEPSHSRDASPVGIKGFN). Ser253 carries the phosphoserine modification. Phosphotyrosine is present on Tyr271. The residue at position 321 (Thr321) is a Phosphothreonine.

It belongs to the PMP-22/EMP/MP20 family. CACNG subfamily. In terms of assembly, the L-type calcium channel is composed of five subunits: alpha-1, alpha-2/delta, beta and gamma. Interacts with the PDZ domains of DLG4/PSD-95 and DLG1/SAP97. May interact with GOPC. Acts as an auxiliary subunit for AMPA-selective glutamate receptors (AMPARs). Found in a complex with GRIA1, GRIA2, GRIA3, GRIA4, CNIH2, CNIH3, CACNG3, CACNG4, CACNG5, CACNG7 and CACNG8. Interacts with GRIA1 and GRIA2. Interacts with MPP2. In terms of processing, phosphorylation of Thr-321 impairs interaction with DLG1 and DLG4. In terms of tissue distribution, brain.

The protein localises to the membrane. It localises to the synapse. The protein resides in the synaptosome. Its function is as follows. Regulates the trafficking and gating properties of AMPA-selective glutamate receptors (AMPARs). Promotes their targeting to the cell membrane and synapses and modulates their gating properties by slowing their rates of activation, deactivation and desensitization. Does not show subunit-specific AMPA receptor regulation and regulates all AMPAR subunits. Thought to stabilize the calcium channel in an inactivated (closed) state. This chain is Voltage-dependent calcium channel gamma-2 subunit (CACNG2), found in Homo sapiens (Human).